A 969-amino-acid polypeptide reads, in one-letter code: Levansucrase (969 aa).

The signal sequence occupies residues 1 to 52 (MDITVNSQSNTVAPKQAECKKMRYSIRKVATVGATSALVGTLAFLGATQVKA). The segment covering 89 to 103 (SEAVESSVAHSEVAT) has biased composition (low complexity). A disordered region spans residues 89-169 (SEAVESSVAH…STASSEAADT (81 aa)). Polar residues predominate over residues 106-116 (VTETQPSNTTP). A compositionally biased stretch (low complexity) spans 124–166 (SSTVVTSSSDATTPSATVAAVSAPAHTSEAAVEAPTSTASSEA). 3 residues coordinate sucrose: Trp-286, Asp-287, and Ser-356. Catalysis depends on Asp-287, which acts as the Nucleophile. Position 443 (Asp-443) interacts with Ca(2+). The sucrose site is built by Arg-448 and Asp-449. Positions 473, 512, and 544 each coordinate Ca(2+). Glu-545 is a binding site for sucrose. Residue Glu-547 is the Proton donor/acceptor of the active site. Arg-565 is a binding site for sucrose. 2 disordered regions span residues 746-843 (VKDG…VGDR) and 860-934 (IVAT…SEGS). The segment covering 747–758 (KDGKDKKADKPE) has biased composition (basic and acidic residues). Residues 776–789 (KPGTSKPADNNQPS) show a composition bias toward polar residues. Basic and acidic residues predominate over residues 872 to 910 (VKEESVTETEAPKPVKSEEKVQSHGVDKANEVTKSDESS). The span at 924-934 (TPKTPSDSEGS) shows a compositional bias: polar residues. The chain crosses the membrane as a helical span at residues 938 to 958 (ILSILATIFAAIASLALLGYG).

It belongs to the glycosyl hydrolase 68 family.

The protein localises to the cell membrane. Its subcellular location is the cell surface. The enzyme catalyses [6)-beta-D-fructofuranosyl-(2-&gt;](n) alpha-D-glucopyranoside + sucrose = [6)-beta-D-fructofuranosyl-(2-&gt;](n+1) alpha-D-glucopyranoside + D-glucose. Ca(2+) may play an important structural role and promote stability of levansucrase. Catalyzes the synthesis of levan, a fructose polymer, by transferring the fructosyl moiety from sucrose to a growing acceptor molecule. Also displays sucrose hydrolase activity. In Streptococcus salivarius, this protein is Levansucrase.